We begin with the raw amino-acid sequence, 232 residues long: Pyridoxine 5'-phosphate synthase (232 aa).

Asparagine 7 is a binding site for 3-amino-2-oxopropyl phosphate. 9 to 10 (DH) contributes to the 1-deoxy-D-xylulose 5-phosphate binding site. Arginine 18 provides a ligand contact to 3-amino-2-oxopropyl phosphate. Catalysis depends on histidine 43, which acts as the Proton acceptor. Arginine 45 and histidine 50 together coordinate 1-deoxy-D-xylulose 5-phosphate. Glutamate 69 functions as the Proton acceptor in the catalytic mechanism. Threonine 99 provides a ligand contact to 1-deoxy-D-xylulose 5-phosphate. Residue histidine 185 is the Proton donor of the active site. 3-amino-2-oxopropyl phosphate-binding positions include glycine 186 and 207–208 (GH).

Belongs to the PNP synthase family. As to quaternary structure, homooctamer; tetramer of dimers.

The protein resides in the cytoplasm. The catalysed reaction is 3-amino-2-oxopropyl phosphate + 1-deoxy-D-xylulose 5-phosphate = pyridoxine 5'-phosphate + phosphate + 2 H2O + H(+). It participates in cofactor biosynthesis; pyridoxine 5'-phosphate biosynthesis; pyridoxine 5'-phosphate from D-erythrose 4-phosphate: step 5/5. Functionally, catalyzes the complicated ring closure reaction between the two acyclic compounds 1-deoxy-D-xylulose-5-phosphate (DXP) and 3-amino-2-oxopropyl phosphate (1-amino-acetone-3-phosphate or AAP) to form pyridoxine 5'-phosphate (PNP) and inorganic phosphate. This chain is Pyridoxine 5'-phosphate synthase, found in Gluconobacter oxydans (strain 621H) (Gluconobacter suboxydans).